The chain runs to 191 residues: Rho-related GTP-binding protein RhoH (191 aa).

11 to 18 is a GTP binding site; the sequence is GDSAVGKT. Residues 33–41 carry the Effector region motif; that stretch reads YKPTVYENT. 58-62 is a binding site for GTP; the sequence is DTAGN. The tract at residues 73 to 86 is interaction with ZAP70; it reads YQQADVVLMCYSVA. 116–119 contributes to the GTP binding site; sequence TQTD. Cysteine methyl ester is present on Cys188. Cys188 carries the S-geranylgeranyl cysteine lipid modification. Residues 189 to 191 constitute a propeptide, removed in mature form; the sequence is KIF.

It belongs to the small GTPase superfamily. Rho family. Interacts with GDI1 and GDI2. Interacts with ZAP70 (via SH2 domains) and the interaction is enhanced by its phosphorylation by LCK. Interacts with SYK and the interaction is enhanced by its phosphorylation by FYN. In terms of processing, phosphorylated on tyrosine by LCK. Phosphorylated by FYN. Phosphorylation enhances the interactions with ZAP70 and SYK and is critical for its function in thymocyte development. In terms of tissue distribution, expression is widespread in hematopoietic cells, including in bone marrow progenitor cells and in differentiated myeloid as well as lymphoid cells. Expressed at high levels in the thymus and mast cells, found in spleen and low-density bone marrow (LDBM) cells and is detected at a low level in neutrophils. In the thymus it is detected in thymocytes of the thymic cortex but not in non-lymphoid cells of fibrovascular and fibroadipose tissues. Expressed in T-cells, B-cells and mast cells.

Its subcellular location is the cytoplasm. It is found in the cell membrane. Binds GTP but lacks intrinsic GTPase activity and is resistant to Rho-specific GTPase-activating proteins. Inhibits the activation of NF-kappa-B by TNF and IKKB and the activation of CRK/p38 by TNF. Inhibits activities of RAC1, RHOA and CDC42. Negatively regulates leukotriene production in neutrophils. Negative regulator of hematopoietic progenitor cell proliferation, survival and migration. Critical regulator of thymocyte development and T-cell antigen receptor (TCR) signaling by mediating recruitment and activation of ZAP70. Required for phosphorylation of CD3Z, membrane translocation of ZAP70 and subsequent activation of the ZAP70-mediated pathways. Essential for efficient beta-selection and positive selection by promoting the ZAP70-dependent phosphorylation of the LAT signalosome during pre-TCR and TCR signaling. Crucial for thymocyte maturation during DN3 to DN4 transition and during positive selection. Plays critical roles in mast cell function by facilitating phosphorylation of SYK in Fc epsilon RI-mediated signal transduction. Essential for the phosphorylation of LAT, LCP2, PLCG1 and PLCG2 and for Ca(2+) mobilization in mast cells. The protein is Rho-related GTP-binding protein RhoH (Rhoh) of Mus musculus (Mouse).